A 572-amino-acid chain; its full sequence is Frizzled-7 (572 aa).

Residues 1–32 (MRGPGTAASHSPLGLCALVLALLGALPTDTRA) form the signal peptide. At 33–254 (QPYHGEKGIS…EEERRFARLW (222 aa)) the chain is on the extracellular side. One can recognise an FZ domain in the interval 44–163 (PDHGFCQPIS…HGAGEICVGQ (120 aa)). Cystine bridges form between Cys49-Cys110, Cys57-Cys103, Cys94-Cys131, Cys120-Cys160, and Cys124-Cys148. N-linked (GlcNAc...) asparagine glycosylation occurs at Asn63. Asn164 carries N-linked (GlcNAc...) asparagine glycosylation. A helical transmembrane segment spans residues 255-275 (VGVWSVLCCASTLFTVLTYLV). The Cytoplasmic segment spans residues 276 to 286 (DMRRFSYPERP). A helical transmembrane segment spans residues 287–307 (IIFLSGCYFMVAVAHVAGFLL). The Extracellular segment spans residues 308-334 (EDRAVCVERFSDDGYRTVAQGTKKEGC). A helical transmembrane segment spans residues 335–355 (TILFMVLYFFGMASSIWWVIL). Residues 356–377 (SLTWFLAAGMKWGHEAIEANSQ) lie on the Cytoplasmic side of the membrane. Residues 378–398 (YFHLAAWAVPAVKTITILAMG) form a helical membrane-spanning segment. Residues 399-421 (QVDGDLLSGVCYVGLSSVDALRG) lie on the Extracellular side of the membrane. Residues 422–442 (FVLAPLFVYLFIGTSFLLAGF) traverse the membrane as a helical segment. Residues 443-468 (VSLFRIRTIMKHDGTKTEKLEKLMVR) are Cytoplasmic-facing. A helical transmembrane segment spans residues 469–489 (IGVFSVLYTVPATIVLACYFY). The Extracellular portion of the chain corresponds to 490–526 (EQAFREHWERTWLLQTCKSYAVPCPPGHFSPMSPDFT). The chain crosses the membrane as a helical span at residues 527-547 (VFMIKYLMTMIVGITTGFWIW). Topologically, residues 548–572 (SGKTLQSWRRFYHRLSHSSKGETAV) are cytoplasmic. Residues 550-555 (KTLQSW) carry the Lys-Thr-X-X-X-Trp motif, mediates interaction with the PDZ domain of Dvl family members motif. The short motif at 570-572 (TAV) is the PDZ-binding element.

The protein belongs to the G-protein coupled receptor Fz/Smo family. As to quaternary structure, interacts with MAGI3. Interacts with DVL1. Interacts with CCDC88C/DAPLE; the interaction displaces DVL1 from FZD7, leading to inhibition of canonical Wnt signaling and triggering of non-canonical Wnt responses. Interacts with MYOC. Binds to SDCBP; this interaction is increased by inositol trisphosphate (IP3). Interacts with glypican GPC3. Ubiquitinated by ZNRF3, leading to its degradation by the proteasome.

It localises to the cell membrane. The protein localises to the endosome membrane. Functionally, receptor for Wnt proteins. Most frizzled receptors are coupled to the beta-catenin canonical signaling pathway, which leads to the activation of disheveled proteins, inhibition of GSK-3 kinase, nuclear accumulation of beta-catenin and activation of Wnt target genes. A second signaling pathway involving PKC and calcium fluxes has been seen for some family members, but it is not yet clear if it represents a distinct pathway or if it can be integrated in the canonical pathway, as PKC seems to be required for Wnt-mediated inactivation of GSK-3 kinase. Both pathways seem to involve interactions with G-proteins. Activation by WNT8 induces expression of beta-catenin target genes. Following ligand activation, binds to CCDC88C/DAPLE which displaces DVL1 from FZD7 and leads to inhibition of canonical Wnt signaling, activation of G-proteins by CCDC88C and triggering of non-canonical Wnt responses. May be involved in transduction and intercellular transmission of polarity information during tissue morphogenesis and/or in differentiated tissues. The sequence is that of Frizzled-7 (Fzd7) from Mus musculus (Mouse).